A 214-amino-acid chain; its full sequence is Heat shock 70 kDa protein cognate 1 (214 aa).

Belongs to the heat shock protein 70 family.

In Drosophila simulans (Fruit fly), this protein is Heat shock 70 kDa protein cognate 1 (Hsc70-1).